Here is a 424-residue protein sequence, read N- to C-terminus: 3-ketoacyl-CoA thiolase B, peroxisomal (424 aa).

The transit peptide at 1–26 directs the protein to the peroxisome; that stretch reads MHRLQVVLGHLAGRPESSSALQAAPC. The segment at 1–26 is PTS2-type peroxisomal targeting signal; it reads MHRLQVVLGHLAGRPESSSALQAAPC. The active-site Acyl-thioester intermediate is the Cys123. N6-acetyllysine occurs at positions 173 and 234. CoA contacts are provided by Arg249, Thr252, and Ser276. The active-site Proton donor/acceptor is the Cys408.

This sequence belongs to the thiolase-like superfamily. Thiolase family. As to quaternary structure, homodimer. Interacts (via PTS2-type peroxisomal targeting signal region) with PEX7; leading to its translocation into peroxisomes. Mainly expressed in liver; weaker levels in kidney, intestine and white adipose tissue.

It is found in the peroxisome. The catalysed reaction is an acyl-CoA + acetyl-CoA = a 3-oxoacyl-CoA + CoA. It carries out the reaction 2 acetyl-CoA = acetoacetyl-CoA + CoA. The enzyme catalyses hexanoyl-CoA + acetyl-CoA = 3-oxooctanoyl-CoA + CoA. It catalyses the reaction tetradecanoyl-CoA + acetyl-CoA = 3-oxohexadecanoyl-CoA + CoA. The catalysed reaction is 3-oxohexadecanedioyl-CoA + CoA = tetradecanedioyl-CoA + acetyl-CoA. It carries out the reaction 3-oxo-(6Z,9Z,12Z,15Z,18Z,21Z)-tetracosahexaenoyl-CoA + CoA = (4Z,7Z,10Z,13Z,16Z,19Z)-docosahexaenoyl-CoA + acetyl-CoA. The protein operates within lipid metabolism; peroxisomal fatty acid beta-oxidation. In terms of biological role, responsible for the thiolytic cleavage of straight chain 3-keto fatty acyl-CoAs (3-oxoacyl-CoAs). Plays an important role in fatty acid peroxisomal beta-oxidation. Catalyzes the cleavage of short, medium, long, and very long straight chain 3-oxoacyl-CoAs. The sequence is that of 3-ketoacyl-CoA thiolase B, peroxisomal from Mus musculus (Mouse).